Here is a 667-residue protein sequence, read N- to C-terminus: MKAIVFAYHDIGCVGLNALAEAGYDIQAVFTHTDNPGENRFFSSVARVAADLALPVFAPEDVNHPLWVERIRELQPDIIFSFYYRNMLSDEILSLAPQGGFNLHGSLLPQYRGRAPINWVLVNGETETGVTLHQMVKKADAGPIAGQYKVAISDVDTALTLHAKMRDAAQELLRNLLPRMKEGPLPLTPQKEADASYFGRRTAADGEIHWQKSAFTINNLVRAVTEPYPGAFSYLGQRKLTIWRSRPLDLVHNKLPGTVLSTAPLTVACGEGALEIITGQGEAGLYVQGDRLAQEMGIVTDVRLGNKPSNTLKRRTRVLILGVNGFIGNHLTERLLQDDRYEVYGLDIGSDAISRFLGNPAFHFVEGDISIHSEWIEYHIKKCDVILPLVAIATPIEYTRNPLRVFELDFEENLKIVRDCVKYNKRIVFPSTSEVYGMCDDKEFDEDTSRLIVGPINKQRWIYSVSKQLLDRVIWAYGVKEGLKFTLFRPFNWMGPRLDNLDAARIGSSRAITQLILNLVEGSPIKLVDGGAQKRCFTDIHDGIEALFRIIENRDGCCDGRIINIGNPTNEASIRELAEMLLTSFENHELRDHFPPFAGFKDIESSAYYGKGYQDVEYRTPSIKNARRILHWQPEIAMQQTVTETLDFFLRAAVIEKTAAPKDELNA.

Positions M1–L304 are formyltransferase ArnAFT. H104 serves as the catalytic Proton donor; for formyltransferase activity. (6R)-10-formyltetrahydrofolate is bound by residues R114 and V136–D140. The dehydrogenase ArnADH stretch occupies residues R314–A667. Residues D347 and D368–I369 contribute to the NAD(+) site. Residues A393, Y398, and T432–S433 each bind UDP-alpha-D-glucuronate. E434 (proton acceptor; for decarboxylase activity) is an active-site residue. Residues R460, N492, K526 to R535, and Y613 each bind UDP-alpha-D-glucuronate. R619 (proton donor; for decarboxylase activity) is an active-site residue.

In the N-terminal section; belongs to the Fmt family. UDP-L-Ara4N formyltransferase subfamily. This sequence in the C-terminal section; belongs to the NAD(P)-dependent epimerase/dehydratase family. UDP-glucuronic acid decarboxylase subfamily. As to quaternary structure, homohexamer, formed by a dimer of trimers.

It catalyses the reaction UDP-alpha-D-glucuronate + NAD(+) = UDP-beta-L-threo-pentopyranos-4-ulose + CO2 + NADH. The enzyme catalyses UDP-4-amino-4-deoxy-beta-L-arabinose + (6R)-10-formyltetrahydrofolate = UDP-4-deoxy-4-formamido-beta-L-arabinose + (6S)-5,6,7,8-tetrahydrofolate + H(+). It participates in nucleotide-sugar biosynthesis; UDP-4-deoxy-4-formamido-beta-L-arabinose biosynthesis; UDP-4-deoxy-4-formamido-beta-L-arabinose from UDP-alpha-D-glucuronate: step 1/3. Its pathway is nucleotide-sugar biosynthesis; UDP-4-deoxy-4-formamido-beta-L-arabinose biosynthesis; UDP-4-deoxy-4-formamido-beta-L-arabinose from UDP-alpha-D-glucuronate: step 3/3. It functions in the pathway bacterial outer membrane biogenesis; lipopolysaccharide biosynthesis. Bifunctional enzyme that catalyzes the oxidative decarboxylation of UDP-glucuronic acid (UDP-GlcUA) to UDP-4-keto-arabinose (UDP-Ara4O) and the addition of a formyl group to UDP-4-amino-4-deoxy-L-arabinose (UDP-L-Ara4N) to form UDP-L-4-formamido-arabinose (UDP-L-Ara4FN). The modified arabinose is attached to lipid A and is required for resistance to polymyxin and cationic antimicrobial peptides. The protein is Bifunctional polymyxin resistance protein ArnA of Yersinia pestis bv. Antiqua (strain Antiqua).